Consider the following 150-residue polypeptide: Dihydroneopterin triphosphate diphosphatase (150 aa).

Positions 5 to 146 constitute a Nudix hydrolase domain; that stretch reads VYKRPVSILV…SNRQAIEQFV (142 aa). Residues Lys-7, Arg-29, and Thr-40 each coordinate substrate. The short motif at 41–62 is the Nudix box element; it reads GSVEEGETAPQAAMREVKEEVT. Residues Glu-56 and Glu-60 each contribute to the Mg(2+) site. 81 to 84 contributes to the substrate binding site; it reads FEIF. Glu-117 is a binding site for Mg(2+). Residue Ser-135 participates in substrate binding.

This sequence belongs to the Nudix hydrolase family. Mg(2+) is required as a cofactor.

The enzyme catalyses 7,8-dihydroneopterin 3'-triphosphate + H2O = 7,8-dihydroneopterin 3'-phosphate + diphosphate + H(+). Catalyzes the hydrolysis of dihydroneopterin triphosphate to dihydroneopterin monophosphate and pyrophosphate. Required for efficient folate biosynthesis. Can also hydrolyze nucleoside triphosphates with a preference for dATP. The sequence is that of Dihydroneopterin triphosphate diphosphatase (nudB) from Escherichia coli O157:H7.